Here is a 962-residue protein sequence, read N- to C-terminus: Integrator complex subunit 7 (962 aa).

2 positions are modified to phosphoserine: Ser-338 and Ser-809.

Belongs to the Integrator subunit 7 family. In terms of assembly, component of the Integrator complex, composed of core subunits INTS1, INTS2, INTS3, INTS4, INTS5, INTS6, INTS7, INTS8, INTS9/RC74, INTS10, INTS11/CPSF3L, INTS12, INTS13, INTS14 and INTS15. The core complex associates with protein phosphatase 2A subunits PPP2CA and PPP2R1A, to form the Integrator-PP2A (INTAC) complex. Interacts with NABP2.

Its subcellular location is the nucleus. The protein resides in the chromosome. The protein localises to the cytoplasm. Functionally, component of the integrator complex, a multiprotein complex that terminates RNA polymerase II (Pol II) transcription in the promoter-proximal region of genes. The integrator complex provides a quality checkpoint during transcription elongation by driving premature transcription termination of transcripts that are unfavorably configured for transcriptional elongation: the complex terminates transcription by (1) catalyzing dephosphorylation of the C-terminal domain (CTD) of Pol II subunit POLR2A/RPB1 and SUPT5H/SPT5, (2) degrading the exiting nascent RNA transcript via endonuclease activity and (3) promoting the release of Pol II from bound DNA. The integrator complex is also involved in terminating the synthesis of non-coding Pol II transcripts, such as enhancer RNAs (eRNAs), small nuclear RNAs (snRNAs), telomerase RNAs and long non-coding RNAs (lncRNAs). May be not involved in the recruitment of cytoplasmic dynein to the nuclear envelope by different components of the INT complex. Plays a role in DNA damage response (DDR) signaling during the S phase. This is Integrator complex subunit 7 (INTS7) from Bos taurus (Bovine).